The chain runs to 486 residues: FAD-dependent oxidoreductase domain-containing protein 1 (486 aa).

A helical transmembrane segment spans residues 66–82 (VVIVGGGVLGLSVAYWL).

Associates with components of the mitochondrial respiratory chain complex I. It depends on FAD as a cofactor.

It localises to the mitochondrion inner membrane. Its function is as follows. Required for the assembly of the mitochondrial membrane respiratory chain NADH dehydrogenase (Complex I). Involved in mid-late stages of complex I assembly. This chain is FAD-dependent oxidoreductase domain-containing protein 1 (FOXRED1), found in Bos taurus (Bovine).